The sequence spans 556 residues: Guanosine-diphosphatase (556 aa).

Residues 1–12 lie on the Cytoplasmic side of the membrane; it reads MTPTMKSIARRK. A helical; Signal-anchor for type II membrane protein transmembrane segment spans residues 13–33; that stretch reads ALLIALSIFAVTFILWNGFPG. Topologically, residues 34–556 are lumenal; the sequence is SSNRPLPSSN…GWNCNVKEEI (523 aa). Glutamate 256 (proton acceptor) is an active-site residue. The N-linked (GlcNAc...) asparagine glycan is linked to asparagine 372.

The protein belongs to the GDA1/CD39 NTPase family. Requires Ca(2+) as cofactor. Mn(2+) is required as a cofactor.

The protein localises to the golgi apparatus membrane. The catalysed reaction is GDP + H2O = GMP + phosphate + H(+). Its pathway is protein modification; protein glycosylation. Functionally, after transfer of sugars to endogenous macromolecular acceptors, the enzyme converts nucleoside diphosphates to nucleoside monophosphates which in turn exit the Golgi lumen in a coupled antiporter reaction, allowing entry of additional nucleotide sugar from the cytosol. The sequence is that of Guanosine-diphosphatase (gdp1) from Schizosaccharomyces pombe (strain 972 / ATCC 24843) (Fission yeast).